A 3993-amino-acid polypeptide reads, in one-letter code: Intermembrane lipid transfer protein VPS13B (3993 aa).

The 101-residue stretch at 2–102 (LESYVTPILM…KDGIQDDHES (101 aa)) folds into the Chorein N-terminal domain. The tract at residues 100–133 (HESCGSNSTNRSTAENTKSSIKPRRIQQAAPADP) is disordered. Positions 103-119 (CGSNSTNRSTAENTKSS) are enriched in polar residues. Phosphoserine is present on residues S413, S998, S1001, and S1032. 3 disordered regions span residues 1262-1303 (SPVW…PFSD), 1616-1637 (DQLKPEKGSGSGGVPTESERNS), and 1735-1770 (TKATEISKQEQKKVDTFDGGTAETSSRYSGAQDSGI). Residues 1264-1291 (VWSSVGTAPPDTSTCSPSADIGTTTEGD) show a composition bias toward polar residues. Basic and acidic residues predominate over residues 1739 to 1750 (EISKQEQKKVDT). Residues 1756-1770 (AETSSRYSGAQDSGI) are compositionally biased toward polar residues. S1789 is subject to Phosphoserine. The tract at residues 2048–2067 (HSSAHSKETSTPSDSILNMD) is disordered. The SHR-BD domain occupies 2604-2683 (HFVICNDTQE…TIQYKGRTAS (80 aa)). A localizes the protein to the Golgi apparatus region spans residues 3880 to 3993 (AFPITEISCA…KNKALRKGFS (114 aa)).

The protein belongs to the VPS13 family. As to quaternary structure, interacts with STX6. Interacts with STX12 (via N-terminus). Interacts with RAB6A isoform 1 (GTP-bound) and isoform 2 (GTP-bound). Interacts with RAB6B (GTP-bound). In terms of tissue distribution, ubiquitously expressed in all examined tissues.

It is found in the recycling endosome membrane. Its subcellular location is the cytoplasmic vesicle. It localises to the secretory vesicle. The protein localises to the acrosome membrane. The protein resides in the golgi apparatus. It is found in the cis-Golgi network membrane. Its subcellular location is the endoplasmic reticulum-Golgi intermediate compartment membrane. It localises to the trans-Golgi network membrane. The protein localises to the early endosome membrane. The protein resides in the lysosome membrane. Mediates the transfer of lipids between membranes at organelle contact sites. Binds phosphatidylinositol 3-phosphate. Functions as a tethering factor in the slow endocytic recycling pathway, to assist traffic between early and recycling endosomes. Involved in the transport of proacrosomal vesicles to the nuclear dense lamina (NDL) during spermatid development. Plays a role in the assembly of the Golgi apparatus, possibly by mediating trafficking to the Golgi membrane. Plays a role in the development of the nervous system, and may be required for neuron projection development. May also play a role during adipose tissue development. Required for maintenance of the ocular lens. Required for proper organization of the Golgi. In Mus musculus (Mouse), this protein is Intermembrane lipid transfer protein VPS13B.